A 429-amino-acid polypeptide reads, in one-letter code: Probable proton-coupled zinc antiporter SLC30A4 (429 aa).

The Cytoplasmic portion of the chain corresponds to 1–113 (MAGSGAWKRL…LLKQRKVKTR (113 aa)). Residues 114–134 (LTIAAVLYLLFMIGELVGGYI) traverse the membrane as a helical segment. Residues 135–143 (ANSLAIMTD) lie on the Lumenal side of the membrane. Residues 144-164 (ALHMLTDLSAIILTLLALWLS) traverse the membrane as a helical segment. Zn(2+) is bound by residues His146 and Asp150. The Cytoplasmic portion of the chain corresponds to 165–178 (SKSPTKRFTFGFHR). The chain crosses the membrane as a helical span at residues 179–199 (LEVLSAMISVLLVYILMGFLL). The Lumenal portion of the chain corresponds to 200–216 (YEAVQRTIHMKYEINGD). A helical transmembrane segment spans residues 217–237 (IMLITAAIGVAVNVIMGFLLN). The Cytoplasmic portion of the chain corresponds to 238–274 (QSGHHHAHSHSLPSNSPTTGPRCGHNQGQDSLAVRAA). The segment at 240-264 (GHHHAHSHSLPSNSPTTGPRCGHNQ) is zinc binding. Residues 275–295 (FVHALGDLVQSVGVLIAAYII) traverse the membrane as a helical segment. 2 residues coordinate Zn(2+): His277 and Asp281. The Lumenal segment spans residues 296-310 (RFKPEYRIADPICTY). Residues 311 to 331 (VFSLLVAFTTFRIIWDTVVII) traverse the membrane as a helical segment. Residues 332-429 (LEGVPSHLNV…TCANCQSSSS (98 aa)) lie on the Cytoplasmic side of the membrane.

It belongs to the cation diffusion facilitator (CDF) transporter (TC 2.A.4) family. SLC30A subfamily. As to quaternary structure, homodimerization could regulate efficiency for zinc transport. Interacts with TMEM163.

It localises to the endosome membrane. The protein localises to the late endosome membrane. The protein resides in the lysosome membrane. It carries out the reaction Zn(2+)(in) + 2 H(+)(out) = Zn(2+)(out) + 2 H(+)(in). Functionally, probable proton-coupled zinc ion antiporter mediating zinc import from cytoplasm potentially into the endocytic compartment. Controls zinc deposition in milk. The sequence is that of Probable proton-coupled zinc antiporter SLC30A4 from Bos taurus (Bovine).